Here is a 340-residue protein sequence, read N- to C-terminus: GTP 3',8-cyclase (340 aa).

In terms of domain architecture, Radical SAM core spans 8–227; it reads KLGRPIRDLR…DMIESHFDIE (220 aa). Position 17 (Arg-17) interacts with GTP. Residues Cys-24 and Cys-28 each contribute to the [4Fe-4S] cluster site. Tyr-30 serves as a coordination point for S-adenosyl-L-methionine. Cys-31 contributes to the [4Fe-4S] cluster binding site. Residue Arg-71 coordinates GTP. Residue Gly-75 coordinates S-adenosyl-L-methionine. Thr-102 lines the GTP pocket. Ser-126 is a binding site for S-adenosyl-L-methionine. Lys-163 contributes to the GTP binding site. Met-197 is a binding site for S-adenosyl-L-methionine. 2 residues coordinate [4Fe-4S] cluster: Cys-261 and Cys-264. 266 to 268 contacts GTP; sequence RAR. Cys-278 serves as a coordination point for [4Fe-4S] cluster.

The protein belongs to the radical SAM superfamily. MoaA family. As to quaternary structure, monomer and homodimer. Requires [4Fe-4S] cluster as cofactor.

It carries out the reaction GTP + AH2 + S-adenosyl-L-methionine = (8S)-3',8-cyclo-7,8-dihydroguanosine 5'-triphosphate + 5'-deoxyadenosine + L-methionine + A + H(+). It functions in the pathway cofactor biosynthesis; molybdopterin biosynthesis. Catalyzes the cyclization of GTP to (8S)-3',8-cyclo-7,8-dihydroguanosine 5'-triphosphate. This Staphylococcus haemolyticus (strain JCSC1435) protein is GTP 3',8-cyclase.